Reading from the N-terminus, the 314-residue chain is Nodulation protein D 2 (314 aa).

Positions 6 to 63 constitute an HTH lysR-type domain; the sequence is LDLNLLVVLDALMTERNLTAAARSINLSQPAMSAAVARLRTNFRDDLFAMAGREFIPT. Residues 23-42 constitute a DNA-binding region (H-T-H motif); it reads LTAAARSINLSQPAMSAAVA.

Belongs to the LysR transcriptional regulatory family.

In terms of biological role, nodD regulates the expression of the nodABCFE genes which encode other nodulation proteins. NodD is also a negative regulator of its own expression. Binds flavonoids as inducers. In Rhizobium tropici, this protein is Nodulation protein D 2 (nodD2).